Consider the following 485-residue polypeptide: P2X purinoceptor 2 (485 aa).

Topologically, residues 1–43 (MAAAQPRLPAGAAMVRRLARGCWSAFWDYETPKVIVVRNRRLG) are cytoplasmic. Disulfide bonds link Cys22–Cys443, Cys126–Cys177, Cys137–Cys160, Cys143–Cys171, Cys227–Cys237, and Cys271–Cys280. Residues 44–64 (FVHRMVQLLILLYFVWYVFIV) traverse the membrane as a helical segment. Residues 65–339 (QKSYQDSETG…IVHGQAGKFS (275 aa)) lie on the Extracellular side of the membrane. ATP is bound by residues Lys82 and Lys84. Residue Asn195 is glycosylated (N-linked (GlcNAc...) asparagine). An ATP-binding site is contributed by Thr197. The N-linked (GlcNAc...) asparagine glycan is linked to Asn252. Positions 297, 301, and 303 each coordinate ATP. N-linked (GlcNAc...) asparagine glycosylation occurs at Asn311. Lys321 provides a ligand contact to ATP. Residues 322 to 335 (AYGIRIDVIVHGQA) are pore-forming motif. The helical transmembrane segment at 340-360 (LIPTIINLATALTSIGVGSFL) threads the bilayer. Over 361 to 485 (CDWILLTFMN…STDPKGLAQL (125 aa)) the chain is Cytoplasmic. The tract at residues 406 to 485 (PPPSHYSQDQ…STDPKGLAQL (80 aa)) is disordered. A compositionally biased stretch (low complexity) spans 420 to 436 (PSGEGPALGEGAELPLA). The span at 469–478 (PSQQDSTSTD) shows a compositional bias: polar residues.

Belongs to the P2X receptor family. In terms of assembly, homotrimer and heterotrimer; functional P2XRs are organized as homomeric and heteromeric trimers. Homotrimer. Forms heterotrimer with P2XR1. Forms heterotrimer with P2XR3. Forms heterotrimer with P2XR6.

The protein localises to the cell membrane. The enzyme catalyses Ca(2+)(in) = Ca(2+)(out). It carries out the reaction K(+)(in) = K(+)(out). The catalysed reaction is Na(+)(in) = Na(+)(out). Fast activation by external ATP. Exhibits slow desensitization during prolonged ATP activation. Not sensitive to the ATP agonist:alpha/beta-methylene-ATP. ATP-gated nonselective transmembrane cation channel permeable to potassium, sodium and calcium. Activation by extracellular ATP induces a variety of cellular responses, such as excitatory postsynaptic responses in sensory neurons, neuromuscular junctions (NMJ) formation, hearing, perception of taste and peristalsis. In the inner ear, regulates sound transduction and auditory neurotransmission, outer hair cell electromotility, inner ear gap junctions, and K(+) recycling. Mediates synaptic transmission between neurons and from neurons to smooth muscle. The chain is P2X purinoceptor 2 (P2rx2) from Mus musculus (Mouse).